We begin with the raw amino-acid sequence, 140 residues long: Nuclear receptor 2C2-associated protein (140 aa).

It belongs to the NR2C2AP family. In terms of assembly, interacts with NR2C2/TR4.

It localises to the nucleus. In terms of biological role, may act as a repressor of NR2C2-mediated transactivation by suppressing the binding between NR2C2/TR4 and the TR4-response element in target genes. In Bos taurus (Bovine), this protein is Nuclear receptor 2C2-associated protein (NR2C2AP).